The chain runs to 213 residues: Octanoyltransferase (213 aa).

Residues 32–207 (ENTPDEIWLV…NILALLNNPP (176 aa)) enclose the BPL/LPL catalytic domain. Residues 71–78 (RGGQVTYH), 138–140 (SLG), and 151–153 (GLA) each bind substrate. Residue Cys169 is the Acyl-thioester intermediate of the active site.

Belongs to the LipB family.

The protein resides in the cytoplasm. It carries out the reaction octanoyl-[ACP] + L-lysyl-[protein] = N(6)-octanoyl-L-lysyl-[protein] + holo-[ACP] + H(+). It functions in the pathway protein modification; protein lipoylation via endogenous pathway; protein N(6)-(lipoyl)lysine from octanoyl-[acyl-carrier-protein]: step 1/2. Its function is as follows. Catalyzes the transfer of endogenously produced octanoic acid from octanoyl-acyl-carrier-protein onto the lipoyl domains of lipoate-dependent enzymes. Lipoyl-ACP can also act as a substrate although octanoyl-ACP is likely to be the physiological substrate. In Citrobacter koseri (strain ATCC BAA-895 / CDC 4225-83 / SGSC4696), this protein is Octanoyltransferase.